A 66-amino-acid chain; its full sequence is KGRTVEIFNSFELLLDPTTQTLDRSFLEKKQELYKKMLNSRIRVLHQYLAAKFNTAYERNTRRGGR.

The protein belongs to the peptidase M67A family. CSN6 subfamily. Component of the CSN complex, probably composed of CSN1, CSN2, CSN3, CSN4, CSN5 (CSN5A or CSN5B), CSN6 (CSN6A or CSN6B), CSN7 and CSN8.

The protein localises to the cytoplasm. It is found in the nucleus. Component of the COP9 signalosome complex (CSN), a complex involved in various cellular and developmental processes such as photomorphogenesis and auxin and jasmonate responses. The CSN complex is an essential regulator of the ubiquitin (Ubl) conjugation pathway by mediating the deneddylation of the cullin subunits of SCF-type E3 ligase complexes, leading to decrease the Ubl ligase activity of SCF. It is involved in repression of photomorphogenesis in darkness by regulating the activity of COP1-containing Ubl ligase complexes. This Brassica oleracea (Wild cabbage) protein is COP9 signalosome complex subunit 6a (CSN6A).